The sequence spans 237 residues: Purine nucleoside phosphorylase DeoD-type (237 aa).

H4 contacts a purine D-ribonucleoside. Residues G20, R24, R43, and 87–90 each bind phosphate; that span reads RVGT. Residues 179–181 and 203–204 each bind a purine D-ribonucleoside; these read EME and SD. The active-site Proton donor is D204.

It belongs to the PNP/UDP phosphorylase family. Homohexamer; trimer of homodimers.

The catalysed reaction is a purine D-ribonucleoside + phosphate = a purine nucleobase + alpha-D-ribose 1-phosphate. It catalyses the reaction a purine 2'-deoxy-D-ribonucleoside + phosphate = a purine nucleobase + 2-deoxy-alpha-D-ribose 1-phosphate. Catalyzes the reversible phosphorolytic breakdown of the N-glycosidic bond in the beta-(deoxy)ribonucleoside molecules, with the formation of the corresponding free purine bases and pentose-1-phosphate. The chain is Purine nucleoside phosphorylase DeoD-type from Streptococcus pyogenes serotype M5 (strain Manfredo).